A 236-amino-acid chain; its full sequence is CBS domain-containing protein CBSX1, chloroplastic (236 aa).

Residues 1–53 (MDAVLYSVPLSFTPLRASSSPSSPYLLLPRFLSVQPCHKFTFSRSFPSKSRIP) constitute a chloroplast transit peptide. The segment at 47–66 (PSKSRIPSASSAAGSTLMTN) is disordered. Residue S54 is modified to N-acetylserine. 2 CBS domains span residues 81–142 (MTKK…GRTE) and 175–231 (MTPA…IKRS).

The protein localises to the plastid. It is found in the chloroplast. The chain is CBS domain-containing protein CBSX1, chloroplastic (CBSX1) from Arabidopsis thaliana (Mouse-ear cress).